We begin with the raw amino-acid sequence, 245 residues long: 8-amino-3,8-dideoxy-manno-octulosonate cytidylyltransferase (245 aa).

It belongs to the KdsB family.

Its subcellular location is the cytoplasm. It carries out the reaction 8-amino-3,8-dideoxy-alpha-D-manno-octulosonate + CTP = CMP-8-amino-3,8-dideoxy-alpha-D-manno-oct-2-ulosonate + diphosphate. Its pathway is bacterial outer membrane biogenesis; lipopolysaccharide biosynthesis. Its function is as follows. Activates KDO8N (a required 8-carbon sugar) for incorporation into bacterial lipopolysaccharide in the Shewanella genus. This chain is 8-amino-3,8-dideoxy-manno-octulosonate cytidylyltransferase, found in Shewanella loihica (strain ATCC BAA-1088 / PV-4).